Consider the following 361-residue polypeptide: Probable purine permease 13 (361 aa).

10 helical membrane passes run 35 to 55 (WILV…AVLL), 68 to 88 (WIST…LCFL), 103 to 123 (LVWI…LYSF), 129 to 151 (SAST…SYYI), 156 to 176 (ITCL…LVSL), 192 to 212 (LIGC…LSLM), 238 to 258 (VASC…LLSV), 268 to 288 (VIYV…SVGA), 289 to 309 (VALI…LSLI), and 323 to 343 (LTEV…FYIY).

Belongs to the purine permeases (TC 2.A.7.14) family.

The protein resides in the membrane. In Arabidopsis thaliana (Mouse-ear cress), this protein is Probable purine permease 13 (PUP13).